A 210-amino-acid polypeptide reads, in one-letter code: Na(+)-translocating NADH-quinone reductase subunit D (210 aa).

Helical transmembrane passes span 9-29, 42-62, 72-92, 96-116, 131-151, and 178-198; these read AVLFGPVLANNPIALQVLGIC, LIMSIALTLVTAFSSFFISTI, IIVQMTIIASLVIVVDQVLQA, ATAKELSVFIGLIITNCIVMG, FLDGIGNGLGYSVVLLTVGFI, and MGLLILPPSAFFIIGLFIWVL.

The protein belongs to the NqrDE/RnfAE family. As to quaternary structure, composed of six subunits; NqrA, NqrB, NqrC, NqrD, NqrE and NqrF.

It localises to the cell inner membrane. The catalysed reaction is a ubiquinone + n Na(+)(in) + NADH + H(+) = a ubiquinol + n Na(+)(out) + NAD(+). In terms of biological role, NQR complex catalyzes the reduction of ubiquinone-1 to ubiquinol by two successive reactions, coupled with the transport of Na(+) ions from the cytoplasm to the periplasm. NqrA to NqrE are probably involved in the second step, the conversion of ubisemiquinone to ubiquinol. This Pseudoalteromonas translucida (strain TAC 125) protein is Na(+)-translocating NADH-quinone reductase subunit D.